The sequence spans 198 residues: MAEKQTAKRNRREEILQSLALMLESSDGSQRITTAKLAASVGVSEAALYRHFPSKTRMFDSLIEFIEDSLITRINLILKDEKDTTARLRLIVLLLLGFGERNPGLTRILTGHALMFEQDRLQGRINQLFERIEAQLRQVLREKRMREGEGYTTDETLLASQLLAFCEGMLSRFVRSEFKYRPTDDFDARWPLIAAQLQ.

An HTH tetR-type domain is found at 10–70 (NRREEILQSL…SLIEFIEDSL (61 aa)). Positions 33–52 (TTAKLAASVGVSEAALYRHF) form a DNA-binding region, H-T-H motif. Residues 117 to 144 (EQDRLQGRINQLFERIEAQLRQVLREKR) are a coiled coil.

It belongs to the nucleoid occlusion factor SlmA family. In terms of assembly, homodimer. Interacts with FtsZ.

It localises to the cytoplasm. The protein localises to the nucleoid. Functionally, required for nucleoid occlusion (NO) phenomenon, which prevents Z-ring formation and cell division over the nucleoid. Acts as a DNA-associated cell division inhibitor that binds simultaneously chromosomal DNA and FtsZ, and disrupts the assembly of FtsZ polymers. SlmA-DNA-binding sequences (SBS) are dispersed on non-Ter regions of the chromosome, preventing FtsZ polymerization at these regions. The protein is Nucleoid occlusion factor SlmA of Escherichia coli O127:H6 (strain E2348/69 / EPEC).